The following is a 145-amino-acid chain: Putative esterase PA1618 (145 aa).

Belongs to the thioesterase PaaI family.

This Pseudomonas aeruginosa (strain ATCC 15692 / DSM 22644 / CIP 104116 / JCM 14847 / LMG 12228 / 1C / PRS 101 / PAO1) protein is Putative esterase PA1618.